Here is a 350-residue protein sequence, read N- to C-terminus: Nicotinate-nucleotide--dimethylbenzimidazole phosphoribosyltransferase (350 aa).

The Proton acceptor role is filled by Glu-317.

Belongs to the CobT family.

The catalysed reaction is 5,6-dimethylbenzimidazole + nicotinate beta-D-ribonucleotide = alpha-ribazole 5'-phosphate + nicotinate + H(+). It participates in nucleoside biosynthesis; alpha-ribazole biosynthesis; alpha-ribazole from 5,6-dimethylbenzimidazole: step 1/2. Catalyzes the synthesis of alpha-ribazole-5'-phosphate from nicotinate mononucleotide (NAMN) and 5,6-dimethylbenzimidazole (DMB). This is Nicotinate-nucleotide--dimethylbenzimidazole phosphoribosyltransferase from Shewanella sp. (strain ANA-3).